A 1509-amino-acid chain; its full sequence is Putative endo-alpha-N-acetylgalactosaminidase (1509 aa).

Residues 1–41 (MPFRGRRRQSALRGLSLAATFCLAAGSSGISGALFATPAQA) form the signal peptide. D288, N290, D292, K294, and D299 together coordinate Ca(2+). Residues 313–585 (GGDDVKNRVV…NLPVKFLQQQ (273 aa)) form a catalytic region. D369 is a substrate binding site. D472 acts as the Nucleophile in catalysis. E498 serves as the catalytic Proton donor/acceptor. The Ca(2+) site is built by N878, E880, D926, and Y929. 2 disordered regions span residues 1176 to 1197 (NGWGPVEKDQANGEQAQGDGPP) and 1403 to 1439 (IKAANPNPGTGSNPGTGSNPGTDPGTGSAGGNSSGGG). Residues 1407–1428 (NPNPGTGSNPGTGSNPGTDPGT) show a composition bias toward low complexity. Residues 1429–1439 (GSAGGNSSGGG) show a composition bias toward gly residues. The short motif at 1475–1479 (LAETG) is the LPXTG sorting signal element. A Pentaglycyl murein peptidoglycan amidated threonine modification is found at T1478. Residues 1479–1509 (GFSGLVLPLGIGLMLLLIGAAAIIVRRHRHS) constitute a propeptide, removed by sortase.

It belongs to the glycosyl hydrolase 101 family. A subfamily.

Its subcellular location is the secreted. The protein resides in the cell wall. It carries out the reaction a 3-O-[beta-D-galactosyl-(1-&gt;3)-N-acetyl-alpha-D-galactosaminyl]-L-threonyl-[protein] + H2O = beta-D-galactosyl-(1-&gt;3)-N-acetyl-D-galactosamine + L-threonyl-[protein]. The catalysed reaction is a 3-O-[beta-D-galactosyl-(1-&gt;3)-N-acetyl-alpha-D-galactosaminyl]-L-seryl-[protein] + H2O = beta-D-galactosyl-(1-&gt;3)-N-acetyl-D-galactosamine + L-seryl-[protein]. Probably involved in the breakdown of mucin-type O-linked glycans. Specifically removes the T-antigen disaccharide (Gal-beta-1,3-GalNAc-alpha) from extracellular host glycoproteins. This Renibacterium salmoninarum (strain ATCC 33209 / DSM 20767 / JCM 11484 / NBRC 15589 / NCIMB 2235) protein is Putative endo-alpha-N-acetylgalactosaminidase.